Consider the following 331-residue polypeptide: 6-phosphogluconolactonase (331 aa).

It belongs to the cycloisomerase 2 family.

It catalyses the reaction 6-phospho-D-glucono-1,5-lactone + H2O = 6-phospho-D-gluconate + H(+). It participates in carbohydrate degradation; pentose phosphate pathway; D-ribulose 5-phosphate from D-glucose 6-phosphate (oxidative stage): step 2/3. Functionally, catalyzes the hydrolysis of 6-phosphogluconolactone to 6-phosphogluconate. This is 6-phosphogluconolactonase from Buchnera aphidicola subsp. Baizongia pistaciae (strain Bp).